The primary structure comprises 180 residues: Large ribosomal subunit protein uL5 (180 aa).

This sequence belongs to the universal ribosomal protein uL5 family. Part of the 50S ribosomal subunit; part of the 5S rRNA/L5/L18/L25 subcomplex. Contacts the 5S rRNA and the P site tRNA. Forms a bridge to the 30S subunit in the 70S ribosome.

In terms of biological role, this is one of the proteins that bind and probably mediate the attachment of the 5S RNA into the large ribosomal subunit, where it forms part of the central protuberance. In the 70S ribosome it contacts protein S13 of the 30S subunit (bridge B1b), connecting the 2 subunits; this bridge is implicated in subunit movement. Contacts the P site tRNA; the 5S rRNA and some of its associated proteins might help stabilize positioning of ribosome-bound tRNAs. This Lacticaseibacillus casei (strain BL23) (Lactobacillus casei) protein is Large ribosomal subunit protein uL5.